The primary structure comprises 327 residues: DNA-directed RNA polymerase subunit alpha (327 aa).

Positions M1–Q233 are alpha N-terminal domain (alpha-NTD). Residues V247–P327 are alpha C-terminal domain (alpha-CTD).

The protein belongs to the RNA polymerase alpha chain family. In terms of assembly, homodimer. The RNAP catalytic core consists of 2 alpha, 1 beta, 1 beta' and 1 omega subunit. When a sigma factor is associated with the core the holoenzyme is formed, which can initiate transcription.

It catalyses the reaction RNA(n) + a ribonucleoside 5'-triphosphate = RNA(n+1) + diphosphate. Its function is as follows. DNA-dependent RNA polymerase catalyzes the transcription of DNA into RNA using the four ribonucleoside triphosphates as substrates. The protein is DNA-directed RNA polymerase subunit alpha of Laribacter hongkongensis (strain HLHK9).